We begin with the raw amino-acid sequence, 420 residues long: 3-isopropylmalate dehydratase large subunit (420 aa).

[4Fe-4S] cluster is bound by residues C300, C360, and C363.

The protein belongs to the aconitase/IPM isomerase family. LeuC type 2 subfamily. Heterodimer of LeuC and LeuD. [4Fe-4S] cluster is required as a cofactor.

The enzyme catalyses (2R,3S)-3-isopropylmalate = (2S)-2-isopropylmalate. It functions in the pathway amino-acid biosynthesis; L-leucine biosynthesis; L-leucine from 3-methyl-2-oxobutanoate: step 2/4. In terms of biological role, catalyzes the isomerization between 2-isopropylmalate and 3-isopropylmalate, via the formation of 2-isopropylmaleate. The protein is 3-isopropylmalate dehydratase large subunit of Syntrophus aciditrophicus (strain SB).